The following is a 289-amino-acid chain: Glycerol facilitator-aquaporin gla (289 aa).

2 helical membrane-spanning segments follow: residues 10 to 30 (ITEF…VANV) and 41 to 61 (SWMI…VAFG). Positions 68–70 (NPA) match the NPA 1 motif. The next 3 membrane-spanning stretches (helical) occupy residues 87–107 (AQYI…IVMV), 151–171 (FVGS…FFGS), and 209–229 (MVAH…LGGP). Positions 235-237 (NPA) match the NPA 2 motif. A helical transmembrane segment spans residues 264-284 (WYAWVPVLAPILASLAAVALF).

It belongs to the MIP/aquaporin (TC 1.A.8) family.

The protein localises to the cell membrane. In terms of biological role, mixed channel protein that transports both water and glycerol. The polypeptide is Glycerol facilitator-aquaporin gla (gla) (Lactococcus lactis subsp. lactis (strain IL1403) (Streptococcus lactis)).